Consider the following 341-residue polypeptide: Putative methyltransferase YGR283C (341 aa).

Belongs to the class IV-like SAM-binding methyltransferase superfamily.

The protein resides in the nucleus. It is found in the nucleolus. This chain is Putative methyltransferase YGR283C, found in Saccharomyces cerevisiae (strain ATCC 204508 / S288c) (Baker's yeast).